Reading from the N-terminus, the 187-residue chain is Elongation factor P (187 aa).

This sequence belongs to the elongation factor P family.

It is found in the cytoplasm. It participates in protein biosynthesis; polypeptide chain elongation. In terms of biological role, involved in peptide bond synthesis. Stimulates efficient translation and peptide-bond synthesis on native or reconstituted 70S ribosomes in vitro. Probably functions indirectly by altering the affinity of the ribosome for aminoacyl-tRNA, thus increasing their reactivity as acceptors for peptidyl transferase. In Mycoplasmopsis pulmonis (strain UAB CTIP) (Mycoplasma pulmonis), this protein is Elongation factor P.